The following is a 952-amino-acid chain: MKVMNPRKTNNTFMYYFVLFVCGFVLMEGCLGQNQTTEIKVGVVLDLHTSFSKLCLTSINISLSDFYKYHSDYTTRLAIHIRDSMEDVVQASSAALDLIKNEQVSAIIGPRTSMQAEFMIRLADKSQVPTITFSATCPLLTSINSPYFVRATLDDSSQVKAIAAIVKSFGWRNVVAIYVDNEFGEGILPLLTDALQDVQAFVVNRCLIPQEANDDQILKELYKLMTMQTRVFVVHMPPTLGFRFFQKAREIGMMEEGYVWLLTDGVMNLLKSNERGSSLENMQGVLGVRSHIPKSKKLKNFRLRWEKMFPKKGNDEEMNIFALRAYDSITALAMAVEKTNIKSLRYDHPIASGNNKTNLGTLGVSRYGPSLLKALSNVRFNGLAGEFELINGQLESSVFDVINIIGSEERIIGLWRPSNGIVNAKSKNTTSVLGERLGPVIWPGKSKDVPKGWQIPTNGKMLRVGIPVKKGFLEFVDAKIDPISNAMTPTGYCIEIFEAVLKKLPYSVIPKYIAFLSPDENYDEMVYQVYTGAYDAVVGDVTIVANRSLYVDFTLPYTESGVSMMVPLKDNKNTWVFLRPWSLDLWVTTACFFVFIGFIVWILEHRVNTDFRGPPHHQIGTSFWFAFSTMNFAHREKVVSNLARFVVLVWCFVVLVLIQSYTANLTSFFTVKLLQPTVTNWKDLIKFNKNIGYQRGTFVRELLKSQGFDESQLKPFGSAVECDELFSNGTITASFDEVAYIKVILSQNSSKYTMVEPSFKTAGFGFVFPKKSPLTDDVSRAILNVTQGEEMQHIENKWFKKPNNCPDLNTSLSSNHLSLSSFWGLFLIAGIASFLALLIFVANFLYEHKHTLFDDSENSFRGKLKFLVRNFDEKDIKSHMFKENAVHNVSSPITQGSSSPLTDQSTPLPRSPEQYRELELRRVSSISSGELFTTQSEQVEDEESAIIQCEGE.

Residues 1–32 form the signal peptide; the sequence is MKVMNPRKTNNTFMYYFVLFVCGFVLMEGCLG. Over 33-582 the chain is Extracellular; that stretch reads QNQTTEIKVG…NTWVFLRPWS (550 aa). 5 N-linked (GlcNAc...) asparagine glycosylation sites follow: N34, N60, N355, N428, and N546. The chain crosses the membrane as a helical span at residues 583-603; sequence LDLWVTTACFFVFIGFIVWIL. The Cytoplasmic segment spans residues 604–612; the sequence is EHRVNTDFR. Residues 613–633 traverse the membrane as a helical segment; the sequence is GPPHHQIGTSFWFAFSTMNFA. Residues 634–637 are Cytoplasmic-facing; it reads HREK. A helical transmembrane segment spans residues 638–658; the sequence is VVSNLARFVVLVWCFVVLVLI. At 659-821 the chain is on the extracellular side; that stretch reads QSYTANLTSF…LSSNHLSLSS (163 aa). N664, N728, N748, N784, and N809 each carry an N-linked (GlcNAc...) asparagine glycan. A helical membrane pass occupies residues 822 to 842; sequence FWGLFLIAGIASFLALLIFVA. At 843 to 952 the chain is on the cytoplasmic side; sequence NFLYEHKHTL…ESAIIQCEGE (110 aa). Polar residues predominate over residues 889 to 908; that stretch reads VSSPITQGSSSPLTDQSTPL. Disordered stretches follow at residues 889 to 914 and 932 to 952; these read VSSP…SPEQ and FTTQ…CEGE.

This sequence belongs to the glutamate-gated ion channel (TC 1.A.10.1) family. In terms of assembly, may form heteromers. In terms of tissue distribution, expressed predominantly in leaves.

It localises to the membrane. Its function is as follows. Glutamate-gated receptor that probably acts as a non-selective cation channel. May be involved in light-signal transduction and calcium homeostasis via the regulation of calcium influx into cells. The protein is Glutamate receptor 2.7 (GLR2.7) of Arabidopsis thaliana (Mouse-ear cress).